We begin with the raw amino-acid sequence, 388 residues long: Succinate--CoA ligase [ADP-forming] subunit beta (388 aa).

The 236-residue stretch at 9–244 (KQLFSRYGLP…PSQEDPREAQ (236 aa)) folds into the ATP-grasp domain. ATP contacts are provided by residues Lys-46, 53 to 55 (GRG), Glu-99, Thr-102, and Glu-107. Residues Asn-199 and Asp-213 each coordinate Mg(2+). Residues Asn-264 and 321 to 323 (GIV) contribute to the substrate site.

This sequence belongs to the succinate/malate CoA ligase beta subunit family. Heterotetramer of two alpha and two beta subunits. The cofactor is Mg(2+).

The catalysed reaction is succinate + ATP + CoA = succinyl-CoA + ADP + phosphate. It carries out the reaction GTP + succinate + CoA = succinyl-CoA + GDP + phosphate. Its pathway is carbohydrate metabolism; tricarboxylic acid cycle; succinate from succinyl-CoA (ligase route): step 1/1. Its function is as follows. Succinyl-CoA synthetase functions in the citric acid cycle (TCA), coupling the hydrolysis of succinyl-CoA to the synthesis of either ATP or GTP and thus represents the only step of substrate-level phosphorylation in the TCA. The beta subunit provides nucleotide specificity of the enzyme and binds the substrate succinate, while the binding sites for coenzyme A and phosphate are found in the alpha subunit. This Proteus mirabilis (strain HI4320) protein is Succinate--CoA ligase [ADP-forming] subunit beta.